A 612-amino-acid chain; its full sequence is MPAYRSRTTTHGRNMAGARGLWRATGMKDSDFGKPIIAVVNSFTQFVPGHVHLKDLGQLVAREIEAAGGVAKEFNTIAVDDGIAMGHDGMLYSLPSREIIADSVEYMVNAHCADAMVCISNCDKITPGMLMAALRLNIPAVFVSGGPMEAGKVVLHGKTHALDLVDAMVAAADDKVSDEDVQIIERSACPTCGSCSGMFTANSMNCLTEALGLSLPGNGSTLATHADRKRLFVEAGHLIVDLARRYYEQEDERVLPRNIATKQAFENAMALDIAMGGSTNTVLHILAAAYEGEIDFTMDDIDRLSRKVPCLSKVAPAKADVHMEDVHRAGGIMSILGELDKGGLINRDCPTVHAETLGDAIDRWDITRTSSDTVRKFFRAAPGGIPTQVAFSQEARWDELDTDRENGVIRSVEHPFSKDGGLAVLKGNIALDGCIVKTAGVDESILKFSGPARVFESQDAAVKGILANEIKAGDVVVIRYEGPKGGPGMQEMLYPTSYLKSKGLGKACALITDGRFSGGTSGLSIGHVSPEAANGGTIGLVREGDMIDIDIPNRTISLRVDEAELAARRTEQDAKGWKPVEQRKRRVTTALKAYAAFATSADRGAVRDLGDR.

A Mg(2+)-binding site is contributed by aspartate 81. Cysteine 122 provides a ligand contact to [2Fe-2S] cluster. Mg(2+) is bound by residues aspartate 123 and lysine 124. Residue lysine 124 is modified to N6-carboxylysine. Cysteine 195 lines the [2Fe-2S] cluster pocket. Position 491 (glutamate 491) interacts with Mg(2+). The Proton acceptor role is filled by serine 517.

The protein belongs to the IlvD/Edd family. In terms of assembly, homodimer. The cofactor is [2Fe-2S] cluster. Mg(2+) serves as cofactor.

The catalysed reaction is (2R)-2,3-dihydroxy-3-methylbutanoate = 3-methyl-2-oxobutanoate + H2O. The enzyme catalyses (2R,3R)-2,3-dihydroxy-3-methylpentanoate = (S)-3-methyl-2-oxopentanoate + H2O. Its pathway is amino-acid biosynthesis; L-isoleucine biosynthesis; L-isoleucine from 2-oxobutanoate: step 3/4. It participates in amino-acid biosynthesis; L-valine biosynthesis; L-valine from pyruvate: step 3/4. In terms of biological role, functions in the biosynthesis of branched-chain amino acids. Catalyzes the dehydration of (2R,3R)-2,3-dihydroxy-3-methylpentanoate (2,3-dihydroxy-3-methylvalerate) into 2-oxo-3-methylpentanoate (2-oxo-3-methylvalerate) and of (2R)-2,3-dihydroxy-3-methylbutanoate (2,3-dihydroxyisovalerate) into 2-oxo-3-methylbutanoate (2-oxoisovalerate), the penultimate precursor to L-isoleucine and L-valine, respectively. The chain is Dihydroxy-acid dehydratase from Rhizobium meliloti (strain 1021) (Ensifer meliloti).